Reading from the N-terminus, the 453-residue chain is AP-4 complex subunit mu-1 (453 aa).

Positions 184–452 (KNEVFLDVVE…LSHSNAYVIR (269 aa)) constitute an MHD domain. The interval 383 to 403 (PGLQGPPSRGPSPSAPPLGLG) is disordered.

The protein belongs to the adaptor complexes medium subunit family. As to quaternary structure, adaptor protein complex 4 (AP-4) is a heterotetramer composed of two large adaptins (epsilon-type subunit AP4E1 and beta-type subunit AP4B1), a medium adaptin (mu-type subunit AP4M1) and a small adaptin (sigma-type AP4S1). Interacts with tyrosine-based sorting signals on the cytoplasmic tail of cargo proteins such as APP, ATG9A, LAMP2 and NAGPA. Interacts with the C-terminal domain of GRID2. Interacts with GRIA1 and GRIA2; the interaction is indirect via CACNG3. Interacts with CACNG3; CACNG3 associates GRIA1 and GRIA2 with the adaptor protein complex 4 (AP-4) to target them to the somatodendritic compartment of neurons. Interacts with HOOK1 and HOOK2; the interactions are direct, mediate the interaction between FTS-Hook-FHIP (FHF) complex and AP-4 and the perinuclear distribution of AP-4. As to expression, high levels in the olfactory bulb, the cerebral cortex, the granule and Purkinje cell layers of the cerebellar cortex and the CA3 region of the hippocampus. Low levels found in molecular layer of cerebellum.

The protein localises to the golgi apparatus. The protein resides in the trans-Golgi network membrane. It localises to the early endosome. Functionally, component of the adaptor protein complex 4 (AP-4). Adaptor protein complexes are vesicle coat components involved both in vesicle formation and cargo selection. They control the vesicular transport of proteins in different trafficking pathways. AP-4 forms a non clathrin-associated coat on vesicles departing the trans-Golgi network (TGN) and may be involved in the targeting of proteins from the trans-Golgi network (TGN) to the endosomal-lysosomal system. It is also involved in protein sorting to the basolateral membrane in epithelial cells and the proper asymmetric localization of somatodendritic proteins in neurons. Within AP-4, the mu-type subunit AP4M1 is directly involved in the recognition and binding of tyrosine-based sorting signals found in the cytoplasmic part of cargos. The adaptor protein complex 4 (AP-4) may also recognize other types of sorting signal. The chain is AP-4 complex subunit mu-1 from Rattus norvegicus (Rat).